A 413-amino-acid polypeptide reads, in one-letter code: F-box protein CPR1 (413 aa).

The 48-residue stretch at 1–48 (MATIPMDIVNDIFLRLPAKTLVRCRALSKPCYHLINDPDFIESHLHRV) folds into the F-box domain.

As to quaternary structure, part of a SCF (ASK-cullin-F-box) protein ligase complex. Interacts with SKP1A/ASK1, SPK1B/ASK2, ASK9, ASK10, ASK11, ASK13, ASK14, ASK16, ASK17, ASK18 and ASK19. Interacts with TRAF1B. Expressed in seedling, root, stem, leaves, inflorescence and silique, especially in veins and trichomes.

It localises to the cytoplasm. It is found in the nucleus. Its pathway is protein modification; protein ubiquitination. In terms of biological role, component of SCF(ASK-cullin-F-box) E3 ubiquitin ligase complexes, which may mediate the ubiquitination and subsequent proteasomal degradation of target proteins. Regulates negatively both salicylic acid (SA)-dependent and SA-independent defense signaling. The chain is F-box protein CPR1 (CPR1) from Arabidopsis thaliana (Mouse-ear cress).